The sequence spans 1441 residues: MGFLTPKKTKKGKDKNESNDNSFDGGSSSYNNNNNNNNQPITYTPTAIRSPNNKTMSQSQTSIPTLSSSPSLNYPSSPPNNNNNNNNGNGNEVISIFNNSNNYNNIKYTHRLSTPPALQPQQQQAIKDLLSSTASTYSSSSPFSKLATTNGGISQPTTPISSPSQPFQSVQPNLIIPTTPTTTTTTPQSVQPIAIQQQQQQQQFPSTIQNTVPILQPLALNTIKPHQQQQQQQNQTQPLQQQQPLPLPNQQQPNQTPLQQQQSQQPNQQQQQQQQQQQQSLQNSRGEGEFENKLKKNLSVWVSPVSNKKNKLNHWQSCSDLELYNKLKIREPEFAQSMSCAISPFHYLKIQYDLESIDQSSGGNSGSGTDSFSDGFKVDLNFDGYTEWYKGMNRKVKNRIHSNGKSHHKASNDAMNNNNNNNNNNNNNNGNNSNNGNINNNGINNHSGEDKSPLKKMVKSLKSGSNSSKKEQQQLHQQLLAAQQQQQQLVHQQQQLAQQQLHQQIQKQIEIIPIKVNDEQKQHLDFLRRHESKSVVPTSPTIKGVQSGAGGGNTGNTDGVNIDNMSLDDDNNNNNNNNNNNNNNNNNNNNNNNNNNNNNNNNNNNNNNNNIAVNTPTTNATIPTNNSTTNNTNNTATPSVINGDSKQQEQPQQSQQQQPQQITPNTLLLSTDSIDLLNTLNKDSNNVDNNNNNNNIDDNNSVSREEMENILKKSQQDSNKDLGSVYGNEDSNSGSPTFQDFQSSAAASNVSGGIDDKSQTGFKKLGEKILSFFRSRKSSDSLNSSNSNIPITNISPGRQSQQQQQQHIQQISQQSQQQIQQQQQQQYVARTQSSSSIVYSSSAQQQQQQQQFQFQQNSVSSQSLQSLNGGNNNNNSNSGSINGGSNSGGGGVSNSTQQLPDQMGLFNIFTQQQQQLIMNGGLGVGGINGLVGTGVIGGDSPPPLSRSQSHASFQGKFAPVIIMEDGSLHLTPRILPFNVRGGSTNRTTPPFLTPNTSQTNLSSLVNNNNNNSSHSNNNNNNNNNTNNKNNNNNTNNSNNNNNNNNNNNINNNNNNNSNKQTANNTTNDFSFDQNTDLRSSTNSLTIGSNSNFSSLKNSLNLENPENNNNPDKNVDNNNFINENRNVEINNEKNENNESNNNDNVKVEIVQFDSINVNSNNKSLKNSFNNNNNENINNNNNENENNNKSVIYKNQQEERPIIHIDDNNLNIESVNGDKNSLRNSRDNNNSSSNNNNNNLKNSNSNNSLRNSNEKRDLNISNNNNNNNNNNNNNNNNNNNNNNNNNNNNNNNENKNKIDIDNNKSLNNSNNSGGGGSKNYRSYSNDYDLQEDIDRMNFNKLQTEIKQIFGHNSGGHRSSGGSNRHKDSIGDKEMDYYSSSDEDDDSMDDSLLSSPDPSPPHIFFFKTIHQPNKQNVKKSFAPLKFNQQNNSNNNDDLGGSILE.

Disordered regions lie at residues 1–95, 150–204, 224–289, 401–477, 529–661, 680–760, 776–810, 849–899, 980–1118, 1161–1185, 1209–1321, 1348–1402, and 1421–1441; these read MGFL…EVIS, NGGI…QQQF, KPHQ…GEGE, HSNG…QLHQ, RHES…QPQQ, LNKD…KSQT, RKSSDSLNSSNSNIPITNISPGRQSQQQQQQHIQQ, QQQF…TQQL, RGGS…DNNN, KSLKNSFNNNNNENINNNNNENENN, NIES…YRSY, GHNS…HIFF, and LKFNQQNNSNNNDDLGGSILE. Low complexity predominate over residues 19–38; sequence NDNSFDGGSSSYNNNNNNNN. The segment covering 39-56 has biased composition (polar residues); that stretch reads QPITYTPTAIRSPNNKTM. Low complexity-rich tracts occupy residues 57-91, 153-187, 227-283, 416-445, 555-564, and 572-635; these read SQSQTSIPTLSSSPSLNYPSSPPNNNNNNNNGNGN, ISQPTTPISSPSQPFQSVQPNLIIPTTPTTTTTTP, QQQQ…SLQN, NNNNNNNNNNNNNNGNNSNNGNINNNGINN, GNTDGVNIDN, and NNNN…TNNT. Residues 636 to 645 show a composition bias toward polar residues; the sequence is ATPSVINGDS. 2 stretches are compositionally biased toward low complexity: residues 648-661 and 680-700; these read QEQPQQSQQQQPQQ and LNKDSNNVDNNNNNNNIDDNN. Residues 703 to 720 are compositionally biased toward basic and acidic residues; the sequence is SREEMENILKKSQQDSNK. Positions 729-751 are enriched in polar residues; that stretch reads EDSNSGSPTFQDFQSSAAASNVS. Composition is skewed to low complexity over residues 780–810 and 849–880; these read DSLNSSNSNIPITNISPGRQSQQQQQQHIQQ and QQQFQFQQNSVSSQSLQSLNGGNNNNNSNSGS. Over residues 881-892 the composition is skewed to gly residues; sequence INGGSNSGGGGV. Residues 981–994 show a composition bias toward polar residues; it reads GGSTNRTTPPFLTP. Residues 995–1067 are compositionally biased toward low complexity; sequence NTSQTNLSSL…NKQTANNTTN (73 aa). Polar residues predominate over residues 1068-1087; it reads DFSFDQNTDLRSSTNSLTIG. The span at 1088-1118 shows a compositional bias: low complexity; the sequence is SNSNFSSLKNSLNLENPENNNNPDKNVDNNN. Low complexity-rich tracts occupy residues 1225-1249 and 1257-1291; these read DNNNSSSNNNNNNLKNSNSNNSLRN and NISNNNNNNNNNNNNNNNNNNNNNNNNNNNNNNNE. Basic and acidic residues predominate over residues 1362-1373; that stretch reads RHKDSIGDKEMD.

This is an uncharacterized protein from Dictyostelium discoideum (Social amoeba).